An 890-amino-acid chain; its full sequence is Wolframin (890 aa).

The residue at position 1 (Met-1) is an N-acetylmethionine. A disordered region spans residues 1 to 86 (MDSNTAPLGP…TGPTKGDMEI (86 aa)). The tract at residues 1–321 (MDSNTAPLGP…MHWLSTIIPT (321 aa)) is interaction with ATP6V1A. The span at 10-20 (PSCPQPPPAPQ) shows a compositional bias: pro residues. The residue at position 30 (Thr-30) is a Phosphothreonine; by FAM20C. Position 32 is a phosphoserine; by FAM20C (Ser-32). Ser-157 carries the post-translational modification Phosphoserine. Helical transmembrane passes span 314–334 (WLST…FIVS), 340–360 (FFAF…MVIC), 402–422 (LEPY…FPIA), 427–447 (IPCS…YLSL), 465–485 (AGLL…KVLG), 496–516 (LVVL…YLFF), 529–549 (CYLV…VILL), 563–583 (YFLF…VGVL), 589–609 (FTSL…VPLL), and 632–652 (MVKL…FYVY). At 653-869 (RSEGMKVYNS…HVKIEHDWRS (217 aa)) the chain is on the lumenal side. 2 N-linked (GlcNAc...) asparagine glycosylation sites follow: Asn-661 and Asn-746. A helical membrane pass occupies residues 870 to 890 (TVHGAVKFAFDFFFFPFLSAA).

Interacts with ATP6V1A. Highly expressed in heart followed by brain, placenta, lung and pancreas. Weakly expressed in liver, kidney and skeletal muscle. Also expressed in islet and beta-cell insulinoma cell line.

It localises to the endoplasmic reticulum membrane. Its subcellular location is the cytoplasmic vesicle. The protein resides in the secretory vesicle. In terms of biological role, participates in the regulation of cellular Ca(2+) homeostasis, at least partly, by modulating the filling state of the endoplasmic reticulum Ca(2+) store. Negatively regulates the ER stress response and positively regulates the stability of V-ATPase subunits ATP6V1A and ATP1B1 by preventing their degradation through an unknown proteasome-independent mechanism. The protein is Wolframin (WFS1) of Homo sapiens (Human).